The primary structure comprises 336 residues: Fructose-1,6-bisphosphatase class 1 (336 aa).

Mg(2+) is bound by residues Glu-91, Asp-114, Leu-116, and Asp-117. Substrate contacts are provided by residues 117 to 120 (DGSS), Asn-210, Tyr-243, and Lys-273. Glu-279 is a binding site for Mg(2+).

The protein belongs to the FBPase class 1 family. Homotetramer. The cofactor is Mg(2+).

The protein resides in the cytoplasm. It carries out the reaction beta-D-fructose 1,6-bisphosphate + H2O = beta-D-fructose 6-phosphate + phosphate. The protein operates within carbohydrate biosynthesis; gluconeogenesis. The protein is Fructose-1,6-bisphosphatase class 1 of Dichelobacter nodosus (strain VCS1703A).